The primary structure comprises 369 residues: Dual specificity protein phosphatase 1-B (369 aa).

Residues arginine 21–asparagine 138 form the Rhodanese domain. A Phosphothreonine; by MAPK1 modification is found at threonine 168. Residues glycine 175–alanine 316 enclose the Tyrosine-protein phosphatase domain. Cysteine 260 (phosphocysteine intermediate) is an active-site residue.

This sequence belongs to the protein-tyrosine phosphatase family. Non-receptor class dual specificity subfamily. Phosphorylated by MAPK1/ERK2 at Thr-168 and at one or more serine residues in a progesterone-dependent manner. Phosphorylation reduces its rate of degradation but does not seem to affect phosphatase activity.

It localises to the nucleus. The enzyme catalyses O-phospho-L-seryl-[protein] + H2O = L-seryl-[protein] + phosphate. It catalyses the reaction O-phospho-L-threonyl-[protein] + H2O = L-threonyl-[protein] + phosphate. The catalysed reaction is O-phospho-L-tyrosyl-[protein] + H2O = L-tyrosyl-[protein] + phosphate. In terms of biological role, dual specificity phosphatase that dephosphorylates MAP kinase MAPK1/ERK2 on both 'Thr-188' and 'Tyr-190', regulating its activity during the meiotic cell cycle. The sequence is that of Dual specificity protein phosphatase 1-B from Xenopus laevis (African clawed frog).